The chain runs to 201 residues: Small ribosomal subunit protein uS4c (201 aa).

The S4 RNA-binding domain maps to 91 to 153 (MRLDNIVFRL…NASKKIVETN (63 aa)).

The protein belongs to the universal ribosomal protein uS4 family. Part of the 30S ribosomal subunit. Contacts protein S5. The interaction surface between S4 and S5 is involved in control of translational fidelity.

The protein localises to the plastid. It localises to the cyanelle. Functionally, one of the primary rRNA binding proteins, it binds directly to 16S rRNA where it nucleates assembly of the body of the 30S subunit. With S5 and S12 plays an important role in translational accuracy. The chain is Small ribosomal subunit protein uS4c (rps4) from Cyanophora paradoxa.